A 445-amino-acid chain; its full sequence is Argininosuccinate synthase (445 aa).

Residues 17-25 (AFSGGLDTS) and Ala-43 each bind ATP. Tyr-99 contributes to the L-citrulline binding site. ATP-binding residues include Gly-129 and Thr-131. Thr-131, Asn-135, and Asp-136 together coordinate L-aspartate. An L-citrulline-binding site is contributed by Asn-135. Asp-136 is an ATP binding site. The L-citrulline site is built by Arg-139 and Ser-192. An ATP-binding site is contributed by Asp-194. L-citrulline contacts are provided by Thr-201, Glu-203, and Glu-280.

The protein belongs to the argininosuccinate synthase family. Type 2 subfamily. As to quaternary structure, homotetramer.

The protein resides in the cytoplasm. The enzyme catalyses L-citrulline + L-aspartate + ATP = 2-(N(omega)-L-arginino)succinate + AMP + diphosphate + H(+). The protein operates within amino-acid biosynthesis; L-arginine biosynthesis; L-arginine from L-ornithine and carbamoyl phosphate: step 2/3. This is Argininosuccinate synthase from Rhodopseudomonas palustris (strain BisB5).